A 513-amino-acid chain; its full sequence is MEKYQAYLELRRSRYQDILYPLFFRESIYGLAYGHESFFIENIDYNNKFSLLIVKRLSTRMYQQTNFILFANDSNKKTFGGYNYNFDSQIILEGFGVVVEILFSLQLFISSLRGLESVKSYKNLQSIHSIFPFFEDKLIYLNHKSDIRIPYPIHLEILVQILRYWIKDVSFFHLIRFFFYYYSNWNSLFPPKKGISPFFSKRNLRIFLFLYNLYVWEYESIFLFLRNKSSQLQLKHFRVFFERIFFYEKRKHLVEISTKNCSYTLFFFKDTFIHYVRYQGKSILVLKNTPLLINKWKYYFLYLWQCYFDIWAGPETIYINQLSQYSFHFLGYFLSIPQNLSVVRSQMLKNSFLIKIVIKKLDTIIPIIPLMRSLAKTKFCNVMGHPISKPVWANFSDFYILDRFLRICRNFSHYYNGSAKKKSFYQIKYILRFSCIKTLARKHKSTVRTFLKKLSSEKLLEEFFTEEDLFSLIFPKTSLTLRRFYRGRIWYLDILFRNDFVNHLELKIGYDIL.

It belongs to the intron maturase 2 family. MatK subfamily.

The protein resides in the plastid. It is found in the chloroplast. Its function is as follows. Usually encoded in the trnK tRNA gene intron. Probably assists in splicing its own and other chloroplast group II introns. The protein is Maturase K of Phaseolus vulgaris (Kidney bean).